Consider the following 154-residue polypeptide: CASP-like protein 5B2 (154 aa).

Over 1 to 10 (MKKLLGGPGT) the chain is Cytoplasmic. A helical transmembrane segment spans residues 11–31 (VCGLLLRIGQCASAAASIGVM). The Extracellular portion of the chain corresponds to 32–42 (VSAKEFSVHTA). Residues 43 to 63 (FCYLIASMGLQLLWSFGLACL) form a helical membrane-spanning segment. Residues 64-77 (DVYALRGKKDLQNP) are Cytoplasmic-facing. The chain crosses the membrane as a helical span at residues 78–98 (ILVSLFVVGDWVTAMLSLAAA). Residues 99–129 (CSSAGVVVLYEKDIKYCNTQSQYPCLRYEVA) lie on the Extracellular side of the membrane. A helical transmembrane segment spans residues 130–150 (VALSFVTWIQIAVSSHVTFWI). The Cytoplasmic portion of the chain corresponds to 151–154 (LASV).

Belongs to the Casparian strip membrane proteins (CASP) family. As to quaternary structure, homodimer and heterodimers. In terms of tissue distribution, expressed in the stele of the root.

Its subcellular location is the cell membrane. The polypeptide is CASP-like protein 5B2 (Arabidopsis thaliana (Mouse-ear cress)).